Here is a 465-residue protein sequence, read N- to C-terminus: Cysteine--tRNA ligase (465 aa).

Cysteine 30 contributes to the Zn(2+) binding site. The short motif at 32–42 (ITVYDYCHVGH) is the 'HIGH' region element. 3 residues coordinate Zn(2+): cysteine 214, histidine 239, and glutamate 243. The 'KMSKS' region motif lies at 271–275 (KMSKS). Residue lysine 274 participates in ATP binding.

It belongs to the class-I aminoacyl-tRNA synthetase family. As to quaternary structure, monomer. It depends on Zn(2+) as a cofactor.

Its subcellular location is the cytoplasm. It carries out the reaction tRNA(Cys) + L-cysteine + ATP = L-cysteinyl-tRNA(Cys) + AMP + diphosphate. This chain is Cysteine--tRNA ligase, found in Burkholderia cenocepacia (strain HI2424).